We begin with the raw amino-acid sequence, 65 residues long: Probable tautomerase RSp1151 (65 aa).

The Proton acceptor; via imino nitrogen role is filled by P2.

Belongs to the 4-oxalocrotonate tautomerase family.

This chain is Probable tautomerase RSp1151, found in Ralstonia nicotianae (strain ATCC BAA-1114 / GMI1000) (Ralstonia solanacearum).